We begin with the raw amino-acid sequence, 2885 residues long: Chromodomain-helicase-DNA-binding protein 9 (2885 aa).

Residues 173 to 195 (QCSSLHSQQSRSNLNPGQNSLGQ) are disordered. K197 is covalently cross-linked (Glycyl lysine isopeptide (Lys-Gly) (interchain with G-Cter in SUMO2)). Disordered stretches follow at residues 242–263 (CSSHQEGNYNRPSPSMTSCSVS), 283–347 (SLLQ…QGNY), and 479–677 (CLQR…QPLQ). Polar residues-rich tracts occupy residues 243–263 (SSHQEGNYNRPSPSMTSCSVS) and 283–310 (SLLQSSAGLAPGHTNQALSDFAGSNSFS). Over residues 323-334 (LLNPTPSLNSNN) the composition is skewed to low complexity. 2 stretches are compositionally biased toward polar residues: residues 335–347 (FQILHSSHPQGNY) and 483–505 (QPPSSKKSDGSGTYTKLQNTQVR). Residue K498 is modified to N6-acetyllysine. Basic and acidic residues-rich tracts occupy residues 507-526 (MSEKKPRKRVESESKQEKAN) and 534-544 (ARAKERGERNI). S549 carries the phosphoserine modification. The segment covering 572–592 (KPKDRDNKKPKTYSKLKEKTK) has biased composition (basic and acidic residues). Residue K595 forms a Glycyl lysine isopeptide (Lys-Gly) (interchain with G-Cter in SUMO2) linkage. S610 is subject to Phosphoserine. A compositionally biased stretch (basic and acidic residues) spans 617–630 (AEQRSQHTFKEQHS). Residues 631 to 643 (QKRRSNRQIKRKK) are compositionally biased toward basic residues. A compositionally biased stretch (basic and acidic residues) spans 644–659 (YAEDAEGKQSEEEVKG). 2 consecutive Chromo domains span residues 689–760 (AIVD…HFLA) and 772–838 (VEVD…HLDR). Residues 867-871 (LNWLL) carry the LXXLL motif 1 motif. Positions 871–1045 (LFNWYNRRNC…FSLLHFLEPL (175 aa)) constitute a Helicase ATP-binding domain. 884 to 891 (DEMGLGKT) serves as a coordination point for ATP. A DEAH box motif is present at residues 996–999 (DEAH). The short motif at 1035 to 1039 (LFSLL) is the LXXLL motif 2 element. One can recognise a Helicase C-terminal domain in the interval 1185–1336 (LIDKLLPKMK…KAVLQSMSGR (152 aa)). Residues 1460 to 1484 (KDELAELSEAESEGEEKPKLRRPCD) are disordered. The span at 1464–1473 (AELSEAESEG) shows a compositional bias: acidic residues. Residues S1467 and S1471 each carry the phosphoserine modification. The span at 1474–1484 (EEKPKLRRPCD) shows a compositional bias: basic and acidic residues. Residues K1587, K1737, and K1902 each participate in a glycyl lysine isopeptide (Lys-Gly) (interchain with G-Cter in SUMO2) cross-link. S2025 is modified (phosphoserine). An LXXLL motif 3 motif is present at residues 2030–2034 (LPRLL). Residue K2037 forms a Glycyl lysine isopeptide (Lys-Gly) (interchain with G-Cter in SUMO2) linkage. The segment at 2046 to 2238 (VKSESLTEEP…TQDSFQANNG (193 aa)) is disordered. Residues S2057 and S2058 each carry the phosphoserine modification. K2073 is covalently cross-linked (Glycyl lysine isopeptide (Lys-Gly) (interchain with G-Cter in SUMO2)). Phosphoserine is present on residues S2074 and S2078. Residues 2083 to 2092 (VLSQATGDQK) show a composition bias toward polar residues. Residues 2093–2103 (SGGKSETDRRM) are compositionally biased toward basic and acidic residues. Over residues 2127 to 2193 (SQSSSDSDSD…SSSSSSSSSS (67 aa)) the composition is skewed to low complexity. Residues 2201–2215 (DVQKREGTPHRKAYD) are compositionally biased toward basic and acidic residues. Residues 2220 to 2238 (ASLSTTQDETQDSFQANNG) show a composition bias toward polar residues. Positions 2331–2471 (QMSKVKKHVR…LSYPQPQRIP (141 aa)) are binds A/T-rich DNA. Residues K2349, K2355, and K2360 each participate in a glycyl lysine isopeptide (Lys-Gly) (interchain with G-Cter in SUMO2) cross-link. Positions 2428–2435 (KKRRGRRR) are a.T hook-like. Positions 2473–2494 (TESPVPVINLKDGTRLAGDDAP) are disordered. A compositionally biased stretch (basic and acidic residues) spans 2484 to 2494 (DGTRLAGDDAP). Residues 2710–2714 (LPNLL) carry the LXXLL motif 4 motif. The tract at residues 2724–2770 (AESGAEEKRGNDSKELEGKKERTESQSPENGGERCVPGSPSTSSTAA) is disordered. Residues 2728–2747 (AEEKRGNDSKELEGKKERTE) show a composition bias toward basic and acidic residues. An LXXLL motif 5 motif is present at residues 2782–2786 (LNPLL). Residues 2818–2847 (KNKSDDLDSSKSVEIKEENSRVRDQEEKGG) show a composition bias toward basic and acidic residues. The disordered stretch occupies residues 2818 to 2885 (KNKSDDLDSS…SEDSDSSNED (68 aa)). K2833 is covalently cross-linked (Glycyl lysine isopeptide (Lys-Gly) (interchain with G-Cter in SUMO2)). Low complexity predominate over residues 2864 to 2876 (RASSGSDSSSSSS).

Belongs to the SNF2/RAD54 helicase family. Interacts with PPARA. Probably interacts with ESR1 and NR1I3. In terms of processing, phosphorylated on serine and tyrosine residues. Expressed in osteoprogenitor cells during development and in mature bone (at protein level).

It localises to the cytoplasm. It is found in the nucleus. The enzyme catalyses ATP + H2O = ADP + phosphate + H(+). In terms of biological role, probable ATP-dependent chromatin-remodeling factor. Acts as a transcriptional coactivator for PPARA and possibly other nuclear receptors. Has DNA-dependent ATPase activity and binds to A/T-rich DNA. Associates with A/T-rich regulatory regions in promoters of genes that participate in the differentiation of progenitors during osteogenesis. The protein is Chromodomain-helicase-DNA-binding protein 9 (Chd9) of Mus musculus (Mouse).